A 130-amino-acid polypeptide reads, in one-letter code: Small ribosomal subunit protein uS9 (130 aa).

The protein belongs to the universal ribosomal protein uS9 family.

The sequence is that of Small ribosomal subunit protein uS9 from Colwellia psychrerythraea (strain 34H / ATCC BAA-681) (Vibrio psychroerythus).